The primary structure comprises 251 residues: Developmental protein SEPALLATA 3 (251 aa).

The 55-residue stretch at 3–57 folds into the MADS-box domain; it reads RGRVELKRIENKINRQVTFAKRRNGLLKKAYELSVLCDAEVALIIFSNRGKLYEF. Residues 91-181 enclose the K-box domain; sequence ELSSQQEYLK…RLRLADGYQM (91 aa). Residues 94 to 177 adopt a coiled-coil conformation; it reads SQQEYLKLKE…NKTLRLRLAD (84 aa).

Forms homodimers. Heterodimer with AP1 or AG capable of binding to CArG-box sequences. Binds AP3/PI to form a ternary complex. Interacts with AGL16. Interacts with TT16/AGL32.

It is found in the nucleus. In terms of biological role, probable transcription factor active in inflorescence development and floral organogenesis. Functions with SEPALLATA1/AGL2 and SEPALLATA2/AGL4 to ensure proper development of petals, stamens and carpels and to prevent the indeterminate growth of the flower meristem. Interacts with APETALA1, AGAMOUS or APETALA3/PISTILLATA to form complexes, that could be involved in genes regulation during floral meristem development. Binds specifically to the CArG box DNA sequence 5'-CC (A/T)6 GG-3'. This Arabidopsis thaliana (Mouse-ear cress) protein is Developmental protein SEPALLATA 3 (SEP3).